Here is a 196-residue protein sequence, read N- to C-terminus: MSQMELIKKLREATGAGMMDVKRALEDAGWDEEKAVQLLRERGAMKAAKKADREAREGIIGHYIHHNQRVGVLVELNCETDFVARNELFQNLAKDLAMHIAMMNPRYVSAEEIPAEELEKERQIYIQAALNEGKPQQIAEKIAEGRLKKYLEEVVLLEQPFVKDDKVKVKELIQQAIAKIGENIVVRRFCRFELGA.

Positions Thr80 to Val83 are involved in Mg(2+) ion dislocation from EF-Tu.

The protein belongs to the EF-Ts family. As to quaternary structure, heterotetramer composed of two EF-Ts.EF-Tu dimer complexes.

Its subcellular location is the cytoplasm. Functionally, associates with the EF-Tu.GDP complex and induces the exchange of GDP to GTP. It remains bound to the aminoacyl-tRNA.EF-Tu.GTP complex up to the GTP hydrolysis stage on the ribosome. The polypeptide is Elongation factor Ts (tsf) (Thermus thermophilus (strain ATCC 27634 / DSM 579 / HB8)).